The primary structure comprises 172 residues: Adenine phosphoribosyltransferase (172 aa).

It belongs to the purine/pyrimidine phosphoribosyltransferase family. In terms of assembly, homodimer.

The protein localises to the cytoplasm. It catalyses the reaction AMP + diphosphate = 5-phospho-alpha-D-ribose 1-diphosphate + adenine. It functions in the pathway purine metabolism; AMP biosynthesis via salvage pathway; AMP from adenine: step 1/1. Functionally, catalyzes a salvage reaction resulting in the formation of AMP, that is energically less costly than de novo synthesis. The polypeptide is Adenine phosphoribosyltransferase (Clostridium botulinum (strain Eklund 17B / Type B)).